Consider the following 196-residue polypeptide: Interferon lambda-3 (196 aa).

Residues 1–21 (MTGDCMPVLVLMAAVLTVTGA) form the signal peptide. 3 disulfides stabilise this stretch: Cys-37–Cys-136, Cys-71–Cys-169, and Cys-188–Cys-195.

The protein belongs to the lambda interferon family.

It localises to the secreted. Functionally, cytokine with antiviral, antitumour and immunomodulatory activities. Plays a critical role in the antiviral host defense, predominantly in the epithelial tissues. Acts as a ligand for the heterodimeric class II cytokine receptor composed of IL10RB and IFNLR1, and receptor engagement leads to the activation of the JAK/STAT signaling pathway resulting in the expression of IFN-stimulated genes (ISG), which mediate the antiviral state. Has a restricted receptor distribution and therefore restricted targets: is primarily active in epithelial cells and this cell type-selective action is because of the epithelial cell-specific expression of its receptor IFNLR1. Seems not to be essential for early virus-activated host defense in vaginal infection, but plays an important role in Toll-like receptor (TLR)-induced antiviral defense. Plays a significant role in the antiviral immune defense in the intestinal epithelium. Exerts an immunomodulatory effect by up-regulating MHC class I antigen expression. In Homo sapiens (Human), this protein is Interferon lambda-3 (IFNL3).